We begin with the raw amino-acid sequence, 266 residues long: Glutamate racemase 1 (266 aa).

Substrate is bound by residues 11–12 (DS) and 43–44 (YG). The active-site Proton donor/acceptor is the cysteine 74. 75–76 (NT) is a binding site for substrate. Cysteine 182 serves as the catalytic Proton donor/acceptor. 183–184 (TH) contributes to the substrate binding site.

Belongs to the aspartate/glutamate racemases family.

The enzyme catalyses L-glutamate = D-glutamate. It participates in cell wall biogenesis; peptidoglycan biosynthesis. Provides the (R)-glutamate required for cell wall biosynthesis. This chain is Glutamate racemase 1, found in Caldanaerobacter subterraneus subsp. tengcongensis (strain DSM 15242 / JCM 11007 / NBRC 100824 / MB4) (Thermoanaerobacter tengcongensis).